The following is a 164-amino-acid chain: Large ribosomal subunit protein uL10 (164 aa).

It belongs to the universal ribosomal protein uL10 family. As to quaternary structure, part of the ribosomal stalk of the 50S ribosomal subunit. The N-terminus interacts with L11 and the large rRNA to form the base of the stalk. The C-terminus forms an elongated spine to which L12 dimers bind in a sequential fashion forming a multimeric L10(L12)X complex.

In terms of biological role, forms part of the ribosomal stalk, playing a central role in the interaction of the ribosome with GTP-bound translation factors. The polypeptide is Large ribosomal subunit protein uL10 (Helicobacter pylori (strain P12)).